The chain runs to 158 residues: 2-C-methyl-D-erythritol 2,4-cyclodiphosphate synthase (158 aa).

A divalent metal cation contacts are provided by Asp-9 and His-11. Residues 9-11 (DVH) and 35-36 (HS) contribute to the 4-CDP-2-C-methyl-D-erythritol 2-phosphate site. A divalent metal cation is bound at residue His-43. Residues 57-59 (DIG), 62-66 (FPDTD), 101-107 (AQKPKMA), 133-136 (TTTE), Phe-140, and Arg-143 contribute to the 4-CDP-2-C-methyl-D-erythritol 2-phosphate site.

The protein belongs to the IspF family. In terms of assembly, homotrimer. A divalent metal cation is required as a cofactor.

The catalysed reaction is 4-CDP-2-C-methyl-D-erythritol 2-phosphate = 2-C-methyl-D-erythritol 2,4-cyclic diphosphate + CMP. The protein operates within isoprenoid biosynthesis; isopentenyl diphosphate biosynthesis via DXP pathway; isopentenyl diphosphate from 1-deoxy-D-xylulose 5-phosphate: step 4/6. Functionally, involved in the biosynthesis of isopentenyl diphosphate (IPP) and dimethylallyl diphosphate (DMAPP), two major building blocks of isoprenoid compounds. Catalyzes the conversion of 4-diphosphocytidyl-2-C-methyl-D-erythritol 2-phosphate (CDP-ME2P) to 2-C-methyl-D-erythritol 2,4-cyclodiphosphate (ME-CPP) with a corresponding release of cytidine 5-monophosphate (CMP). The polypeptide is 2-C-methyl-D-erythritol 2,4-cyclodiphosphate synthase (Geobacillus sp. (strain WCH70)).